A 362-amino-acid polypeptide reads, in one-letter code: 3-isopropylmalate dehydrogenase (362 aa).

77-88 serves as a coordination point for NAD(+); that stretch reads GPKWGTGAVRPE. Residues arginine 95, arginine 105, arginine 134, and aspartate 223 each coordinate substrate. Aspartate 223, aspartate 248, and aspartate 252 together coordinate Mg(2+). 287 to 298 lines the NAD(+) pocket; it reads GSAPDLPANKVN.

The protein belongs to the isocitrate and isopropylmalate dehydrogenases family. In terms of assembly, homodimer. The cofactor is Mg(2+). Mn(2+) is required as a cofactor.

It is found in the cytoplasm. The catalysed reaction is (2R,3S)-3-isopropylmalate + NAD(+) = 4-methyl-2-oxopentanoate + CO2 + NADH. It participates in amino-acid biosynthesis; L-leucine biosynthesis; L-leucine from 3-methyl-2-oxobutanoate: step 3/4. Catalyzes the oxidation of 3-carboxy-2-hydroxy-4-methylpentanoate (3-isopropylmalate) to 3-carboxy-4-methyl-2-oxopentanoate. The product decarboxylates to 4-methyl-2 oxopentanoate. The protein is 3-isopropylmalate dehydrogenase (LEU2) of Kluyveromyces lactis (strain ATCC 8585 / CBS 2359 / DSM 70799 / NBRC 1267 / NRRL Y-1140 / WM37) (Yeast).